The following is a 532-amino-acid chain: UDP-glucuronosyltransferase 1A6 (532 aa).

A signal peptide spans 1–26 (MACLLRSFQRISAGVFFLALWGMVVG). N294 and N346 each carry an N-linked (GlcNAc...) asparagine glycan. The chain crosses the membrane as a helical span at residues 490-506 (VIGFLLAVVLTVAFITF).

It belongs to the UDP-glycosyltransferase family. As to quaternary structure, isoform 1 interacts with isoform 3/i2 suggesting that oligomerization is involved in negative regulation of transferase activity by isoform 3. Isoform 1 also interacts with respective i2 isoforms of UGT1A1, UGT1A3, UGT1A4, UGT1A7, UGT1A8, UGT1A9 and UGT1A10. Expressed in skin. Isoforms 1 and 3 are expressed in kidney and liver. Isoform 1 but not isoform 2 is expressed in colon, esophagus and small intestine.

It localises to the microsome. The protein localises to the endoplasmic reticulum membrane. It carries out the reaction glucuronate acceptor + UDP-alpha-D-glucuronate = acceptor beta-D-glucuronoside + UDP + H(+). It catalyses the reaction (5Z,8Z,11Z,14Z)-eicosatetraenoate + UDP-alpha-D-glucuronate = O-[(5Z),(8Z),(11Z),(14Z)-eicosatetraenoyl]-beta-D-glucuronate + UDP. The enzyme catalyses 15-hydroxy-(5Z,8Z,11Z,13E)-eicosatetraenoate + UDP-alpha-D-glucuronate = 15-O-(beta-D-glucuronosyl)-(5Z,8Z,11Z,14Z)-eicosatetraenoate + UDP + H(+). The catalysed reaction is (E)-ferulate + UDP-alpha-D-glucuronate = (E)-4-O-(beta-D-glucuronosyl)-ferulate + UDP + H(+). It carries out the reaction (E)-ferulate + UDP-alpha-D-glucuronate = (E)-ferulic acid beta-D-glucuronate ester + UDP. In terms of biological role, UDP-glucuronosyltransferase (UGT) that catalyzes phase II biotransformation reactions in which lipophilic substrates are conjugated with glucuronic acid to facilitate their inactivation and excretion from the body. Essential for the elimination and detoxification of drugs, xenobiotics and endogenous compounds. Involved in the glucuronidation of arachidonic acid (AA) and AA-derived eicosanoids including 15-HETE and 20-HETE. Conjugates small planar phenolic molecules such as 4-nitrophenol, 1-naphthol, and 4-methylumbelliferone. The bulky phenol 4-hydroxybiphenyl, androgens and estrogens are not substrates. 2-hydroxybiphenyl is an excellent substrate. Involved in the glucuronidation of the phytochemical ferulic acid at the phenolic or the carboxylic acid group. Isoform 3 lacks transferase activity but acts as a negative regulator of isoform 1. The chain is UDP-glucuronosyltransferase 1A6 from Homo sapiens (Human).